The primary structure comprises 109 residues: T cell receptor alpha variable 27 (109 aa).

An N-terminal signal peptide occupies residues 1–19 (MVLKFSVSILWIQLAWVST). The region spanning 20 to 109 (QLLEQSPQFL…GDTGLYLCAG (90 aa)) is the Ig-like domain. Asn-36 and Asn-42 each carry an N-linked (GlcNAc...) asparagine glycan. Cys-41 and Cys-107 are joined by a disulfide.

Alpha-beta TR is a heterodimer composed of an alpha and beta chain; disulfide-linked. The alpha-beta TR is associated with the transmembrane signaling CD3 coreceptor proteins to form the TR-CD3 (TcR or TCR). The assembly of alpha-beta TR heterodimers with CD3 occurs in the endoplasmic reticulum where a single alpha-beta TR heterodimer associates with one CD3D-CD3E heterodimer, one CD3G-CD3E heterodimer and one CD247 homodimer forming a stable octameric structure. CD3D-CD3E and CD3G-CD3E heterodimers preferentially associate with TR alpha and TR beta chains, respectively. The association of the CD247 homodimer is the last step of TcR assembly in the endoplasmic reticulum and is required for transport to the cell surface. In terms of assembly, (Microbial infection) Interacts with Staphylococcus aureus enterotoxin H/entH.

Its subcellular location is the cell membrane. In terms of biological role, v region of the variable domain of T cell receptor (TR) alpha chain that participates in the antigen recognition. Alpha-beta T cell receptors are antigen specific receptors which are essential to the immune response and are present on the cell surface of T lymphocytes. Recognize peptide-major histocompatibility (MH) (pMH) complexes that are displayed by antigen presenting cells (APC), a prerequisite for efficient T cell adaptive immunity against pathogens. Binding of alpha-beta TR to pMH complex initiates TR-CD3 clustering on the cell surface and intracellular activation of LCK that phosphorylates the ITAM motifs of CD3G, CD3D, CD3E and CD247 enabling the recruitment of ZAP70. In turn, ZAP70 phosphorylates LAT, which recruits numerous signaling molecules to form the LAT signalosome. The LAT signalosome propagates signal branching to three major signaling pathways, the calcium, the mitogen-activated protein kinase (MAPK) kinase and the nuclear factor NF-kappa-B (NF-kB) pathways, leading to the mobilization of transcription factors that are critical for gene expression and essential for T cell growth and differentiation. The T cell repertoire is generated in the thymus, by V-(D)-J rearrangement. This repertoire is then shaped by intrathymic selection events to generate a peripheral T cell pool of self-MH restricted, non-autoaggressive T cells. Post-thymic interaction of alpha-beta TR with the pMH complexes shapes TR structural and functional avidity. This is T cell receptor alpha variable 27 from Homo sapiens (Human).